Reading from the N-terminus, the 69-residue chain is Putative membrane protein insertion efficiency factor (69 aa).

Belongs to the UPF0161 family.

The protein localises to the cell inner membrane. Functionally, could be involved in insertion of integral membrane proteins into the membrane. This chain is Putative membrane protein insertion efficiency factor, found in Dechloromonas aromatica (strain RCB).